The following is a 468-amino-acid chain: Proline--tRNA ligase (468 aa).

Belongs to the class-II aminoacyl-tRNA synthetase family. ProS type 3 subfamily. As to quaternary structure, homodimer.

It is found in the cytoplasm. It catalyses the reaction tRNA(Pro) + L-proline + ATP = L-prolyl-tRNA(Pro) + AMP + diphosphate. Catalyzes the attachment of proline to tRNA(Pro) in a two-step reaction: proline is first activated by ATP to form Pro-AMP and then transferred to the acceptor end of tRNA(Pro). The chain is Proline--tRNA ligase from Frankia alni (strain DSM 45986 / CECT 9034 / ACN14a).